Here is a 664-residue protein sequence, read N- to C-terminus: MELHGEEQPPPPQEPWGRLLRLGAEEDEPQILLWKREWTIGRRRGCDLSFPSNKLVSGDHCKLTVDEISGEVTLEDTSTNGTVINKLQVVKKQTYPLQSGDIIYLVYRKNEPEHNVAYLYESLSGKQSLTQDSLEANKENMFHVTKDCSGPGQGDDPQVPLLSPMAQTCLEEPQPSTSTSDLLPTASTSSTEPELTSAGQKHSSSSGPGNTSISPKGRSSLVANGELSSLSPVFQDKEASFSLLESKDHEELEPAKKKMKGDGELDTNLQLLVSGQRGNAQTSSEDVKDASVKPDKMEETLTCIICQDLLHDCVSLQPCMHTFCAACYSGWMERSSLCPTCRCPVERICKNHILNNLVEAYLIQHPDKSRSEEDVRSMDARNKITQDMLQPKVRRSFSDEEGSSEDLLELSDVDSESSDISQPYIVCRQCPEYRRQAVQSLPCPVPESELGATLALGGEAPSTSASLPTAAPDYMCPLQGSHAICTCCFQPMPDRRAEREQDPRVAPQQCAVCLQPFCHLYWGCTRTGCFGCLAPFCELNLGDKCLDGVLNNNNYESDILKNYLATRGLTWKSVLTESLLALQRGVFMLSDYRITGNTVLCYCCGLRSFRELTYQYRQNIPASELPVTVTSRPDCYWGRNCRTQVKAHHAMKFNHICEQTRFKN.

Residues 38-89 (WTIGRRRGCDLSFPSNKLVSGDHCKLTVDEISGEVTLEDTSTNGTVINKLQV) form the FHA domain. Disordered regions lie at residues 170-220 (LEEP…GRSS) and 245-264 (ESKDHEELEPAKKKMKGDGE). Residues 174–202 (QPSTSTSDLLPTASTSSTEPELTSAGQKH) show a composition bias toward polar residues. A compositionally biased stretch (low complexity) spans 203–215 (SSSSGPGNTSISP). The segment covering 245–263 (ESKDHEELEPAKKKMKGDG) has biased composition (basic and acidic residues). An RING-type zinc finger spans residues 303-342 (CIICQDLLHDCVSLQPCMHTFCAACYSGWMERSSLCPTCR). Position 385 is a phosphothreonine (threonine 385). The disordered stretch occupies residues 389-413 (LQPKVRRSFSDEEGSSEDLLELSDV). Acidic residues predominate over residues 399 to 413 (DEEGSSEDLLELSDV). Residues 633-655 (PDCYWGRNCRTQVKAHHAMKFNH) form a PBZ-type zinc finger.

The protein belongs to the CHFR family. Interacts with HDAC1 and HDAC2. Interacts with PML (with sumoylated form of PML). Poly-ADP-ribosylated. In addition to binding non covalently poly(ADP-ribose) via its PBZ-type zinc finger, the protein is also covalently poly-ADP-ribosylated by PARP1. Post-translationally, autoubiquitinated; may regulate its cellular level. In terms of processing, phosphorylated by PKB. Phosphorylation may affect its E3 ligase activity.

It is found in the nucleus. The protein resides in the PML body. The catalysed reaction is S-ubiquitinyl-[E2 ubiquitin-conjugating enzyme]-L-cysteine + [acceptor protein]-L-lysine = [E2 ubiquitin-conjugating enzyme]-L-cysteine + N(6)-ubiquitinyl-[acceptor protein]-L-lysine.. It functions in the pathway protein modification; protein ubiquitination. E3 ubiquitin-protein ligase that functions in the antephase checkpoint by actively delaying passage into mitosis in response to microtubule poisons. Acts in early prophase before chromosome condensation, when the centrosome move apart from each other along the periphery of the nucleus. Probably involved in signaling the presence of mitotic stress caused by microtubule poisons by mediating the 'Lys-48'-linked ubiquitination of target proteins, leading to their degradation by the proteasome. Promotes the ubiquitination and subsequent degradation of AURKA and PLK1. Probably acts as a tumor suppressor, possibly by mediating the polyubiquitination of HDAC1, leading to its degradation. May also promote the formation of 'Lys-63'-linked polyubiquitin chains and functions with the specific ubiquitin-conjugating UBC13-MMS2 (UBE2N-UBE2V2) heterodimer. Substrates that are polyubiquitinated at 'Lys-63' are usually not targeted for degradation, but are rather involved in signaling cellular stress. This chain is E3 ubiquitin-protein ligase CHFR (Chfr), found in Mus musculus (Mouse).